Consider the following 225-residue polypeptide: Ribonuclease 3 (225 aa).

The 123-residue stretch at 5–127 (IDKLERKLGY…IIGAIYLDSD (123 aa)) folds into the RNase III domain. Residue Glu40 participates in Mg(2+) binding. Residue Asp44 is part of the active site. 2 residues coordinate Mg(2+): Asp113 and Glu116. Glu116 is a catalytic residue. Residues 154 to 224 (DPKTRLQEFL…AETALEQLTN (71 aa)) form the DRBM domain.

It belongs to the ribonuclease III family. Homodimer. The cofactor is Mg(2+).

It localises to the cytoplasm. It carries out the reaction Endonucleolytic cleavage to 5'-phosphomonoester.. Its function is as follows. Digests double-stranded RNA. Involved in the processing of primary rRNA transcript to yield the immediate precursors to the large and small rRNAs (23S and 16S). Processes some mRNAs, and tRNAs when they are encoded in the rRNA operon. Processes pre-crRNA and tracrRNA of type II CRISPR loci if present in the organism. The chain is Ribonuclease 3 from Vibrio campbellii (strain ATCC BAA-1116).